Reading from the N-terminus, the 564-residue chain is Excitatory amino acid transporter 4 (564 aa).

At methionine 1–arginine 55 the chain is on the cytoplasmic side. A Phosphoserine modification is found at serine 2. 3 helical membrane passes run asparagine 56–leucine 76, methionine 99–leucine 119, and valine 133–isoleucine 153. N-linked (GlcNAc...) asparagine glycosylation is found at asparagine 216, asparagine 232, and asparagine 239. Helical transmembrane passes span serine 262–valine 285, phenylalanine 295–isoleucine 322, and leucine 344–isoleucine 365. The discontinuously helical intramembrane region spans phenylalanine 371 to leucine 401. Serine 388–serine 390 serves as a coordination point for L-aspartate. The helical transmembrane segment at isoleucine 411–phenylalanine 437 threads the bilayer. Na(+)-binding residues include glycine 419, threonine 421, and asparagine 423. Residues threonine 427, isoleucine 468–glycine 472, aspartate 501, and asparagine 508 contribute to the L-aspartate site. Residues isoleucine 451–glycine 484 constitute an intramembrane region (discontinuously helical). Residues tryptophan 498–isoleucine 519 form a helical membrane-spanning segment. Na(+)-binding residues include asparagine 508 and aspartate 512.

The protein belongs to the dicarboxylate/amino acid:cation symporter (DAACS) (TC 2.A.23) family. SLC1A6 subfamily. In terms of assembly, homotrimer. Detected in brain, cerebellum and hippocampus.

The protein resides in the cell membrane. The enzyme catalyses K(+)(in) + L-glutamate(out) + 3 Na(+)(out) + H(+)(out) = K(+)(out) + L-glutamate(in) + 3 Na(+)(in) + H(+)(in). It carries out the reaction K(+)(in) + L-aspartate(out) + 3 Na(+)(out) + H(+)(out) = K(+)(out) + L-aspartate(in) + 3 Na(+)(in) + H(+)(in). The catalysed reaction is D-aspartate(out) + K(+)(in) + 3 Na(+)(out) + H(+)(out) = D-aspartate(in) + K(+)(out) + 3 Na(+)(in) + H(+)(in). Sodium-dependent, high-affinity amino acid transporter that mediates the uptake of L-glutamate and also L-aspartate and D-aspartate. Functions as a symporter that transports one amino acid molecule together with two or three Na(+) ions and one proton, in parallel with the counter-transport of one K(+) ion. Mediates Cl(-) flux that is not coupled to amino acid transport; this avoids the accumulation of negative charges due to aspartate and Na(+) symport. Plays a redundant role in the rapid removal of released glutamate from the synaptic cleft, which is essential for terminating the postsynaptic action of glutamate. The protein is Excitatory amino acid transporter 4 (SLC1A6) of Canis lupus familiaris (Dog).